A 156-amino-acid polypeptide reads, in one-letter code: Phytohormone-binding protein (156 aa).

3 residues coordinate gibberellin A3: Gln22, Gln68, and Thr141.

Belongs to the BetVI family.

Its function is as follows. Binds gibberellin A3 (GA3) in vitro. The sequence is that of Phytohormone-binding protein from Medicago truncatula (Barrel medic).